We begin with the raw amino-acid sequence, 310 residues long: Transcription initiation factor IIB (310 aa).

2 repeat units span residues 126-209 and 220-301.

This sequence belongs to the TFIIB family.

Its function is as follows. Stabilizes TBP binding to an archaeal box-A promoter. Also responsible for recruiting RNA polymerase II to the pre-initiation complex (DNA-TBP-TFIIB). In Pyrodictium occultum, this protein is Transcription initiation factor IIB.